Reading from the N-terminus, the 249-residue chain is Adapter protein MecA (249 aa).

The protein belongs to the MecA family. As to quaternary structure, homodimer.

Functionally, enables the recognition and targeting of unfolded and aggregated proteins to the ClpC protease or to other proteins involved in proteolysis. The protein is Adapter protein MecA of Streptococcus thermophilus (strain ATCC BAA-491 / LMD-9).